The sequence spans 387 residues: MAKSNYVFTSESVAEGHPDKVCDRISDAVVDLFLTHDPYARVACETLATTNRVVIAGEVRGPKAALDQVETVARHAVKDIGYEQDGFHWEKFEFTCHLHQQSADIAMGVDAGTDKDEGAGDQGIMFGYACDETPALMPAPLFYSHSILKSLSEARHSGALSWLGPDAKSQVSLQYVDGRPVRATSVVVSTQHSESVPQEEIREAVRRHVLDVLPDGWMCPEDTFYVNPTGRFVIGGPDGDAGLTGRKIIVDTYGGAAPHGGGAFSGKDPTKVDRSAAYAARYLAKNVVAAGLARKCTIQLSYAIGVSYPLSVYIDTAGTGQVDEDKLSDVLRQLMNLSPRGIREHLKLNRPIYARTAAYGHFGREPDADGGFSWEKTDLVDALRRAF.

His17 serves as a coordination point for ATP. Asp19 lines the Mg(2+) pocket. A K(+)-binding site is contributed by Glu45. Positions 58 and 101 each coordinate L-methionine. The flexible loop stretch occupies residues 101–111 (QSADIAMGVDA). Residues 166 to 168 (DAK), 231 to 232 (RF), Asp240, 246 to 247 (RK), Ala263, and Lys267 each bind ATP. Asp240 lines the L-methionine pocket. An L-methionine-binding site is contributed by Lys271.

Belongs to the AdoMet synthase family. As to quaternary structure, homotetramer; dimer of dimers. Requires Mg(2+) as cofactor. K(+) is required as a cofactor.

It localises to the cytoplasm. It catalyses the reaction L-methionine + ATP + H2O = S-adenosyl-L-methionine + phosphate + diphosphate. The protein operates within amino-acid biosynthesis; S-adenosyl-L-methionine biosynthesis; S-adenosyl-L-methionine from L-methionine: step 1/1. Its function is as follows. Catalyzes the formation of S-adenosylmethionine (AdoMet) from methionine and ATP. The overall synthetic reaction is composed of two sequential steps, AdoMet formation and the subsequent tripolyphosphate hydrolysis which occurs prior to release of AdoMet from the enzyme. This is S-adenosylmethionine synthase from Rhodospirillum centenum (strain ATCC 51521 / SW).